The sequence spans 343 residues: S-adenosylmethionine:tRNA ribosyltransferase-isomerase (343 aa).

The protein belongs to the QueA family. In terms of assembly, monomer.

It localises to the cytoplasm. It catalyses the reaction 7-aminomethyl-7-carbaguanosine(34) in tRNA + S-adenosyl-L-methionine = epoxyqueuosine(34) in tRNA + adenine + L-methionine + 2 H(+). It functions in the pathway tRNA modification; tRNA-queuosine biosynthesis. Its function is as follows. Transfers and isomerizes the ribose moiety from AdoMet to the 7-aminomethyl group of 7-deazaguanine (preQ1-tRNA) to give epoxyqueuosine (oQ-tRNA). This is S-adenosylmethionine:tRNA ribosyltransferase-isomerase from Pseudoalteromonas translucida (strain TAC 125).